A 249-amino-acid polypeptide reads, in one-letter code: Thrombin-like enzyme barnettobin (249 aa).

The signal sequence occupies residues 1-10 (APKELQVSYA). Positions 11-16 (HKSSEL) are excised as a propeptide. The 224-residue stretch at 17 to 240 (VIGGDECDIN…YPPWIQSIIA (224 aa)) folds into the Peptidase S1 domain. Disulfide bonds link C23–C154, C41–C57, C89–C247, C133–C201, C165–C180, and C191–C216. Catalysis depends on charge relay system residues H56 and D101. N145 and N161 each carry an N-linked (GlcNAc...) asparagine glycan. The active-site Charge relay system is S195. N242 carries N-linked (GlcNAc...) asparagine glycosylation.

Belongs to the peptidase S1 family. Snake venom subfamily. Monomer. Post-translationally, glycoprotein, contains approx. 52% carbohydrate which could be removed by N-glycosidase. Glycosylation is important, since deglycosylated barnettobin loses its clotting and defibrinogenating effects. As to expression, expressed by the venom gland.

Its subcellular location is the secreted. With respect to regulation, both coagulant and amidolytic activities are inhibited by PMSF. Amidolytic activity is partially inhibited by DTT, chymostatin, SBTI and TLCK, but not by heparin and EDTA. Functionally, thrombin-like snake venom serine protease that releases only fibrinopeptide A from human Aalpha chain of fibrinogen (specific coagulant activity was 251.7 NIH thrombin units/mg). Also shows fibrino(geno)lytic activities in vitro and defibrinogenating effects in vivo. This is Thrombin-like enzyme barnettobin from Bothrops barnetti (Barnett's lancehead).